Reading from the N-terminus, the 218-residue chain is N-(5'-phosphoribosyl)anthranilate isomerase (218 aa).

This sequence belongs to the TrpF family.

It carries out the reaction N-(5-phospho-beta-D-ribosyl)anthranilate = 1-(2-carboxyphenylamino)-1-deoxy-D-ribulose 5-phosphate. Its pathway is amino-acid biosynthesis; L-tryptophan biosynthesis; L-tryptophan from chorismate: step 3/5. This chain is N-(5'-phosphoribosyl)anthranilate isomerase, found in Rhodopseudomonas palustris (strain BisA53).